Consider the following 118-residue polypeptide: Large ribosomal subunit protein bL19 (118 aa).

The protein belongs to the bacterial ribosomal protein bL19 family.

Its function is as follows. This protein is located at the 30S-50S ribosomal subunit interface and may play a role in the structure and function of the aminoacyl-tRNA binding site. The protein is Large ribosomal subunit protein bL19 of Campylobacter concisus (strain 13826).